A 390-amino-acid polypeptide reads, in one-letter code: tRNA (guanine(9)-N1)-methyltransferase (390 aa).

The interval Met1–Ala72 is disordered. The segment covering Ala43–Arg59 has biased composition (basic and acidic residues). One can recognise an SAM-dependent MTase TRM10-type domain in the interval Lys92–Pro340. S-adenosyl-L-methionine is bound by residues Leu246 to Ser247, Gly266, Asp270 to His274, Cys278, Leu292, and Lys305 to Leu307. The active-site Proton acceptor is Asp270. The segment at Lys343–Gln390 is disordered. Residues Ala347 to Lys356 show a composition bias toward basic and acidic residues. Over residues Glu357–Gln390 the composition is skewed to acidic residues.

It belongs to the class IV-like SAM-binding methyltransferase superfamily. TRM10 family. In terms of assembly, monomer.

The protein localises to the cytoplasm. It is found in the nucleus. The catalysed reaction is guanosine(9) in tRNA + S-adenosyl-L-methionine = N(1)-methylguanosine(9) in tRNA + S-adenosyl-L-homocysteine + H(+). S-adenosyl-L-methionine-dependent guanine N(1)-methyltransferase that catalyzes the formation of N(1)-methylguanine at position 9 (m1G9) in cytoplasmic tRNA. The chain is tRNA (guanine(9)-N1)-methyltransferase from Cryptococcus neoformans var. neoformans serotype D (strain JEC21 / ATCC MYA-565) (Filobasidiella neoformans).